We begin with the raw amino-acid sequence, 291 residues long: Pyridoxal 5'-phosphate synthase subunit PdxS (291 aa).

Residue Asp23 participates in D-ribose 5-phosphate binding. The active-site Schiff-base intermediate with D-ribose 5-phosphate is Lys80. Position 152 (Gly152) interacts with D-ribose 5-phosphate. Arg164 lines the D-glyceraldehyde 3-phosphate pocket. D-ribose 5-phosphate is bound by residues Gly213 and 234 to 235 (GS).

Belongs to the PdxS/SNZ family. As to quaternary structure, in the presence of PdxT, forms a dodecamer of heterodimers.

It catalyses the reaction aldehydo-D-ribose 5-phosphate + D-glyceraldehyde 3-phosphate + L-glutamine = pyridoxal 5'-phosphate + L-glutamate + phosphate + 3 H2O + H(+). Its pathway is cofactor biosynthesis; pyridoxal 5'-phosphate biosynthesis. Functionally, catalyzes the formation of pyridoxal 5'-phosphate from ribose 5-phosphate (RBP), glyceraldehyde 3-phosphate (G3P) and ammonia. The ammonia is provided by the PdxT subunit. Can also use ribulose 5-phosphate and dihydroxyacetone phosphate as substrates, resulting from enzyme-catalyzed isomerization of RBP and G3P, respectively. This is Pyridoxal 5'-phosphate synthase subunit PdxS from Methanocorpusculum labreanum (strain ATCC 43576 / DSM 4855 / Z).